The following is a 171-amino-acid chain: Putative metal-dependent hydrolase BH0277 (171 aa).

Zn(2+) contacts are provided by histidine 64, histidine 155, and histidine 159.

This sequence belongs to the metal hydrolase YfiT family. As to quaternary structure, homodimer. The cofactor is Zn(2+).

The protein resides in the cytoplasm. Possible metal-dependent hydrolase. This Halalkalibacterium halodurans (strain ATCC BAA-125 / DSM 18197 / FERM 7344 / JCM 9153 / C-125) (Bacillus halodurans) protein is Putative metal-dependent hydrolase BH0277.